Consider the following 616-residue polypeptide: Chaperone protein HscA (616 aa).

The protein belongs to the heat shock protein 70 family.

Its function is as follows. Chaperone involved in the maturation of iron-sulfur cluster-containing proteins. Has a low intrinsic ATPase activity which is markedly stimulated by HscB. Involved in the maturation of IscU. This chain is Chaperone protein HscA, found in Pectobacterium carotovorum subsp. carotovorum (strain PC1).